Reading from the N-terminus, the 317-residue chain is Ribosomal protein L11 methyltransferase (317 aa).

Positions 158, 179, 201, and 244 each coordinate S-adenosyl-L-methionine.

The protein belongs to the methyltransferase superfamily. PrmA family.

The protein localises to the cytoplasm. It carries out the reaction L-lysyl-[protein] + 3 S-adenosyl-L-methionine = N(6),N(6),N(6)-trimethyl-L-lysyl-[protein] + 3 S-adenosyl-L-homocysteine + 3 H(+). Methylates ribosomal protein L11. This chain is Ribosomal protein L11 methyltransferase, found in Streptococcus agalactiae serotype Ia (strain ATCC 27591 / A909 / CDC SS700).